The following is a 498-amino-acid chain: Calcium-dependent protein kinase 22 (498 aa).

Residue Gly-2 is the site of N-myristoyl glycine attachment. In terms of domain architecture, Protein kinase spans 36-305 (YSFGDELGKG…AADVLEHPWM (270 aa)). ATP-binding positions include 42–50 (LGKGNFGTT) and Lys-65. Residue Asp-164 is the Proton acceptor of the active site. Residue Ser-204 is modified to Phosphoserine. An autoinhibitory domain region spans residues 309 to 339 (APDKPIDNVVLSRMKQFRAMNKLKKLALKVI). 4 consecutive EF-hand domains span residues 346–381 (EEIK…HGSK), 382–417 (LSET…RHRL), 418–453 (ERDE…HGMG), and 454–488 (DEAN…GILQ). Residues Asp-359, Asp-361, Ser-363, Ser-365, Glu-370, Asp-395, Asp-397, Asn-399, Thr-401, Glu-406, Asp-431, Asp-433, Ser-435, His-437, Glu-442, Asp-466, Asn-468, Asp-470, Lys-472, and Glu-477 each contribute to the Ca(2+) site.

Belongs to the protein kinase superfamily. Ser/Thr protein kinase family. CDPK subfamily.

The protein localises to the membrane. It carries out the reaction L-seryl-[protein] + ATP = O-phospho-L-seryl-[protein] + ADP + H(+). It catalyses the reaction L-threonyl-[protein] + ATP = O-phospho-L-threonyl-[protein] + ADP + H(+). Its activity is regulated as follows. Activated by calcium. Autophosphorylation may play an important role in the regulation of the kinase activity. May play a role in signal transduction pathways that involve calcium as a second messenger. This is Calcium-dependent protein kinase 22 (CPK22) from Arabidopsis thaliana (Mouse-ear cress).